The chain runs to 142 residues: MAKKIAGQLKLQVSAGSATPSPPIGPALGQRGINIMEFCKAFNAQTQEMEKGSPVPVVITYYQDKSFTFVMKTPPVSYFLKKAANLKSGSKEPGKVKAGTVSRDKVREIATAKMKDLNANDVEAAMRMVEGSARSMGLEVVG.

It belongs to the universal ribosomal protein uL11 family. In terms of assembly, part of the ribosomal stalk of the 50S ribosomal subunit. Interacts with L10 and the large rRNA to form the base of the stalk. L10 forms an elongated spine to which L12 dimers bind in a sequential fashion forming a multimeric L10(L12)X complex. One or more lysine residues are methylated.

In terms of biological role, forms part of the ribosomal stalk which helps the ribosome interact with GTP-bound translation factors. The chain is Large ribosomal subunit protein uL11 from Mesorhizobium japonicum (strain LMG 29417 / CECT 9101 / MAFF 303099) (Mesorhizobium loti (strain MAFF 303099)).